The sequence spans 557 residues: MPLDDDLEDNPSLVPPPSTTTTSSNATGDAATMMDEVEEAEDAPTADFRLFASTYSKTKNISAQTIRKGEKDFESHGTRAQASALDASRDAMRDVLSYTRVHNTKSASGWCRGWYFPDWWKDWPEDWEQQKLTKRGKEGAGEDDEEEKDRKLPPLHVRDRVVLLEHTNVASQSLGRAVTGLPKDRPARGREWLLPEEALYLVERGSLDLWWPTKGIEEVFPADGSVPAAAAATTSAKGEGEQRTEEDEEDDDEYKYGLPLSLQAAYALLIGEDGERGKVSLQKFQVFSHLKRAGYNVIRAPTNPLPVQEDTQLTTTTQPASKPISVTEWLISCLPQSKSSPTDPPPYGPLVPPGFYRSYNTIYNYLSLRPSSTSSSASPTADNQPQKPQSPESDESDSGSDSPYKIHYHVYKASTKFTRTRPPPPDFYISVISAKDTSIPTLSEISSLLASAPADLPKAEWLAGGPARLYARLKHGYRNVLLAVNDHGVINYMRFAEGGFAKEELFRNYDMRVSGGPRRGGGGGGKKSGNNNGRGSRGRGGGRGGGRGGRGGRGRGN.

Disordered regions lie at residues 1–36 (MPLD…MMDE), 131–152 (KLTK…DRKL), 225–252 (SVPA…EDDD), 370–403 (PSST…SDSP), and 514–557 (SGGP…GRGN). Basic and acidic residues predominate over residues 131 to 140 (KLTKRGKEGA). A compositionally biased stretch (low complexity) spans 370-381 (PSSTSSSASPTA). Gly residues-rich tracts occupy residues 517-527 (PRRGGGGGGKK) and 538-549 (GRGGGRGGGRGG).

The protein belongs to the SEN54 family. TRNA splicing endonuclease is a heterotetramer composed of tsp-2/sen2, tsp-1/sen15, tsp-4/sen34 and tsp-5/sen54. Interacts directly with tsp-2/sen2.

Non-catalytic subunit of the tRNA-splicing endonuclease complex, a complex responsible for identification and cleavage of the splice sites in pre-tRNA. It cleaves pre-tRNA at the 5' and 3' splice sites to release the intron. The products are an intron and two tRNA half-molecules bearing 2',3' cyclic phosphate and 5'-OH termini. There are no conserved sequences at the splice sites, but the intron is invariably located at the same site in the gene, placing the splice sites an invariant distance from the constant structural features of the tRNA body. May be required to embody the molecular ruler of the complex. The protein is Probable tRNA-splicing endonuclease subunit tsp-5 (tsp-5) of Neurospora crassa (strain ATCC 24698 / 74-OR23-1A / CBS 708.71 / DSM 1257 / FGSC 987).